Reading from the N-terminus, the 277-residue chain is 2,3,4,5-tetrahydropyridine-2,6-dicarboxylate N-succinyltransferase (277 aa).

Positions 106 and 143 each coordinate substrate.

Belongs to the transferase hexapeptide repeat family. In terms of assembly, homotrimer.

It is found in the cytoplasm. It catalyses the reaction (S)-2,3,4,5-tetrahydrodipicolinate + succinyl-CoA + H2O = (S)-2-succinylamino-6-oxoheptanedioate + CoA. It functions in the pathway amino-acid biosynthesis; L-lysine biosynthesis via DAP pathway; LL-2,6-diaminopimelate from (S)-tetrahydrodipicolinate (succinylase route): step 1/3. The sequence is that of 2,3,4,5-tetrahydropyridine-2,6-dicarboxylate N-succinyltransferase from Variovorax paradoxus (strain S110).